The following is a 90-amino-acid chain: Probable Fe(2+)-trafficking protein (90 aa).

It belongs to the Fe(2+)-trafficking protein family.

In terms of biological role, could be a mediator in iron transactions between iron acquisition and iron-requiring processes, such as synthesis and/or repair of Fe-S clusters in biosynthetic enzymes. This Polynucleobacter asymbioticus (strain DSM 18221 / CIP 109841 / QLW-P1DMWA-1) (Polynucleobacter necessarius subsp. asymbioticus) protein is Probable Fe(2+)-trafficking protein.